The following is a 211-amino-acid chain: Probable GTP-binding protein EngB (211 aa).

Residues 26 to 200 (SGIEVAFAGR…RQKLDNWFST (175 aa)) form the EngB-type G domain. Residues 34 to 41 (GRSNAGKS), 61 to 65 (GRTQL), 79 to 82 (DLPG), 146 to 149 (TKAD), and 179 to 181 (FSS) each bind GTP. 2 residues coordinate Mg(2+): Ser-41 and Thr-63.

This sequence belongs to the TRAFAC class TrmE-Era-EngA-EngB-Septin-like GTPase superfamily. EngB GTPase family. Mg(2+) is required as a cofactor.

Its function is as follows. Necessary for normal cell division and for the maintenance of normal septation. This chain is Probable GTP-binding protein EngB, found in Pectobacterium carotovorum subsp. carotovorum (strain PC1).